We begin with the raw amino-acid sequence, 126 residues long: Probable 4-amino-4-deoxy-L-arabinose-phosphoundecaprenol flippase subunit ArnF (126 aa).

Residues 1–21 (MGFLWALFSVGLVSAAQLLLR) traverse the membrane as a helical segment. At 22–47 (SAMVALPPLTDIVAFLQHLLHFQPGT) the chain is on the periplasmic side. A helical membrane pass occupies residues 48-68 (VGLFFGLLGYLLSMVCWYFAL). Topologically, residues 69–76 (HRLPLSKA) are cytoplasmic. Residues 77–97 (YALLSLSYILVWAAAIWLPGW) form a helical membrane-spanning segment. Residues 98-100 (HEP) are Periplasmic-facing. Residues 101 to 121 (FYWQSLLGVTIIVAGVLTIFW) traverse the membrane as a helical segment. Residues 122-126 (PVKRR) lie on the Cytoplasmic side of the membrane.

The protein belongs to the ArnF family. In terms of assembly, heterodimer of ArnE and ArnF.

The protein localises to the cell inner membrane. Its pathway is bacterial outer membrane biogenesis; lipopolysaccharide biosynthesis. Functionally, translocates 4-amino-4-deoxy-L-arabinose-phosphoundecaprenol (alpha-L-Ara4N-phosphoundecaprenol) from the cytoplasmic to the periplasmic side of the inner membrane. The sequence is that of Probable 4-amino-4-deoxy-L-arabinose-phosphoundecaprenol flippase subunit ArnF from Klebsiella pneumoniae (strain 342).